A 345-amino-acid polypeptide reads, in one-letter code: Ribosomal large subunit pseudouridine synthase B (345 aa).

Polar residues predominate over residues methionine 1 to glutamine 10. The segment at methionine 1–leucine 60 is disordered. The 73-residue stretch at glutamate 64–proline 136 folds into the S4 RNA-binding domain. The active-site Nucleophile is the aspartate 171.

The protein belongs to the pseudouridine synthase RsuA family.

It carries out the reaction uridine(2605) in 23S rRNA = pseudouridine(2605) in 23S rRNA. Responsible for synthesis of pseudouridine from uracil-2605 in 23S ribosomal RNA. This chain is Ribosomal large subunit pseudouridine synthase B (rluB), found in Pasteurella multocida (strain Pm70).